The primary structure comprises 907 residues: Lateral signaling target protein 2 homolog (907 aa).

Disordered stretches follow at residues 339–395 (SSDN…DPAN), 463–604 (LTDS…SGDA), 662–688 (NSSPPEPEDPPEPAANSTDKPKEPDPA), 716–756 (EVNA…SENG), and 770–834 (GSGG…EERR). Positions 351–361 (DISSFYTSNNR) are enriched in polar residues. Residues 367 to 393 (EPNEDDDVSESNDEDEDEGEEVDEDDP) are compositionally biased toward acidic residues. 2 stretches are compositionally biased toward polar residues: residues 463–475 (LTDSGLGTANPSL) and 486–495 (PVTSSHPIAQ). Over residues 501-516 (SEEEGEVDEYDEDDSE) the composition is skewed to acidic residues. Over residues 525 to 549 (HHTKHQRRHRHHHHHHRKHYSKHRS) the composition is skewed to basic residues. The span at 550-565 (SAAGSAGTSGTTCSAA) shows a compositional bias: low complexity. The span at 568 to 580 (QISSCDTSPSSGG) shows a compositional bias: polar residues. Over residues 592-602 (GSSGNSSGGSG) the composition is skewed to gly residues. The span at 742–751 (APRTMMTTAA) shows a compositional bias: polar residues. Low complexity predominate over residues 777–793 (GSSRSSQERSVSLSETS). Positions 816–826 (PKSVQSEQSGQ) are enriched in polar residues. The FYVE-type zinc finger occupies 845–905 (DGDAPRCMAC…VCRECFVREV (61 aa)). Zn(2+) contacts are provided by Cys851, Cys854, Cys867, Cys870, Cys875, Cys878, Cys897, and Cys900.

The protein belongs to the lst-2 family.

In terms of biological role, negative regulator of epidermal growth factor receptor (EGFR) signaling. The polypeptide is Lateral signaling target protein 2 homolog (Culex quinquefasciatus (Southern house mosquito)).